Reading from the N-terminus, the 94-residue chain is Ribonuclease P protein component 1 (94 aa).

The protein belongs to the eukaryotic/archaeal RNase P protein component 1 family. As to quaternary structure, consists of a catalytic RNA component and at least 4-5 protein subunits.

It is found in the cytoplasm. It carries out the reaction Endonucleolytic cleavage of RNA, removing 5'-extranucleotides from tRNA precursor.. Part of ribonuclease P, a protein complex that generates mature tRNA molecules by cleaving their 5'-ends. The polypeptide is Ribonuclease P protein component 1 (Thermofilum pendens (strain DSM 2475 / Hrk 5)).